We begin with the raw amino-acid sequence, 254 residues long: Peptide methionine sulfoxide reductase A5 (254 aa).

An N-terminal signal peptide occupies residues 1–33; that stretch reads MAISLKRNRFFIPYTNLVFFFFLCVSLLDKTVS.

It belongs to the MsrA Met sulfoxide reductase family.

It catalyses the reaction L-methionyl-[protein] + [thioredoxin]-disulfide + H2O = L-methionyl-(S)-S-oxide-[protein] + [thioredoxin]-dithiol. It carries out the reaction [thioredoxin]-disulfide + L-methionine + H2O = L-methionine (S)-S-oxide + [thioredoxin]-dithiol. Its function is as follows. Catalyzes the reduction of methionine sulfoxide (MetSO) to methionine in proteins. Plays a protective role against oxidative stress by restoring activity to proteins that have been inactivated by methionine oxidation. MSRA family specifically reduces the MetSO S-enantiomer. The chain is Peptide methionine sulfoxide reductase A5 (MSRA5) from Arabidopsis thaliana (Mouse-ear cress).